A 74-amino-acid chain; its full sequence is Small ribosomal subunit protein bS20c (74 aa).

The protein belongs to the bacterial ribosomal protein bS20 family.

The protein resides in the plastid. The protein localises to the chloroplast. Its function is as follows. Binds directly to 16S ribosomal RNA. In Cyanidioschyzon merolae (strain NIES-3377 / 10D) (Unicellular red alga), this protein is Small ribosomal subunit protein bS20c.